Reading from the N-terminus, the 149-residue chain is Large ribosomal subunit protein uL22c (149 aa).

Belongs to the universal ribosomal protein uL22 family. As to quaternary structure, part of the 50S ribosomal subunit.

Its subcellular location is the plastid. The protein resides in the chloroplast. This protein binds specifically to 23S rRNA. Its function is as follows. The globular domain of the protein is located near the polypeptide exit tunnel on the outside of the subunit, while an extended beta-hairpin is found that lines the wall of the exit tunnel in the center of the 70S ribosome. The sequence is that of Large ribosomal subunit protein uL22c (rpl22) from Oryza nivara (Indian wild rice).